We begin with the raw amino-acid sequence, 114 residues long: UPF0145 protein YG5714_0873 (114 aa).

It belongs to the UPF0145 family.

The protein is UPF0145 protein YG5714_0873 of Saccharolobus islandicus (strain Y.G.57.14 / Yellowstone #1) (Sulfolobus islandicus).